The primary structure comprises 2531 residues: Putative neurobeachin homolog (2531 aa).

3 stretches are compositionally biased toward acidic residues: residues 1–10, 26–35, and 62–74; these read MDISETEYND, EDEVNDEESN, and EPSD…EESE. Disordered regions lie at residues 1-101, 1363-1398, 1420-1440, and 1642-1670; these read MDIS…SPPP, NDGD…DNGG, EELK…MPPQ, and RFVP…EISE. Residues 1363-1379 show a composition bias toward basic and acidic residues; that stretch reads NDGDHASIKNGSDHSEN. Over residues 1427 to 1440 the composition is skewed to polar residues; it reads QSNGRRPSTLMPPQ. Over residues 1650–1670 the composition is skewed to basic and acidic residues; it reads SRHEEANLPEGEKNEEPEISE. The region spanning 1714-1822 is the BEACH-type PH domain; the sequence is PSSQSACFST…TVRKVVYQLP (109 aa). Positions 1841 to 2130 constitute a BEACH domain; the sequence is MTPRQLFKHS…QLLAEAHPPR (290 aa). WD repeat units follow at residues 2289–2332, 2350–2389, 2429–2468, and 2471–2510; these read GHGD…GFIA, GHEA…LRRI, LSEE…KLYT, and PLNS…WHYE.

It belongs to the WD repeat neurobeachin family. In terms of assembly, interacts with RII subunit of PKA.

Its subcellular location is the cytoplasm. The protein resides in the membrane. It localises to the nucleus. Functionally, binds to type II regulatory subunits of protein kinase A and anchors/targets them to the membrane. May anchor the kinase to cytoskeletal and/or organelle-associated proteins. Regulates endosomal traffic in polarized epithelial cells such as the vulval precursor cells and intestinal cells. Thought to act as a negative regulator of lin-12 activity in vulval precursor cells. May have a role in the internalization process from basolateral surface of polarized epithelial cells. This is Putative neurobeachin homolog from Caenorhabditis briggsae.